The chain runs to 302 residues: 4-hydroxy-tetrahydrodipicolinate synthase (302 aa).

T49 contacts pyruvate. Catalysis depends on Y137, which acts as the Proton donor/acceptor. Residue K166 is the Schiff-base intermediate with substrate of the active site. Position 208 (I208) interacts with pyruvate.

The protein belongs to the DapA family. As to quaternary structure, homotetramer; dimer of dimers.

Its subcellular location is the cytoplasm. The enzyme catalyses L-aspartate 4-semialdehyde + pyruvate = (2S,4S)-4-hydroxy-2,3,4,5-tetrahydrodipicolinate + H2O + H(+). It participates in amino-acid biosynthesis; L-lysine biosynthesis via DAP pathway; (S)-tetrahydrodipicolinate from L-aspartate: step 3/4. Functionally, catalyzes the condensation of (S)-aspartate-beta-semialdehyde [(S)-ASA] and pyruvate to 4-hydroxy-tetrahydrodipicolinate (HTPA). In Chloroherpeton thalassium (strain ATCC 35110 / GB-78), this protein is 4-hydroxy-tetrahydrodipicolinate synthase.